Here is a 689-residue protein sequence, read N- to C-terminus: Glycine--tRNA ligase beta subunit (689 aa).

This sequence belongs to the class-II aminoacyl-tRNA synthetase family. As to quaternary structure, tetramer of two alpha and two beta subunits.

It is found in the cytoplasm. It catalyses the reaction tRNA(Gly) + glycine + ATP = glycyl-tRNA(Gly) + AMP + diphosphate. The sequence is that of Glycine--tRNA ligase beta subunit from Pectobacterium atrosepticum (strain SCRI 1043 / ATCC BAA-672) (Erwinia carotovora subsp. atroseptica).